The primary structure comprises 547 residues: Glucose-6-phosphate isomerase (547 aa).

The Proton donor role is filled by glutamate 350. Catalysis depends on residues histidine 381 and lysine 510.

This sequence belongs to the GPI family.

The protein localises to the cytoplasm. It catalyses the reaction alpha-D-glucose 6-phosphate = beta-D-fructose 6-phosphate. It functions in the pathway carbohydrate biosynthesis; gluconeogenesis. It participates in carbohydrate degradation; glycolysis; D-glyceraldehyde 3-phosphate and glycerone phosphate from D-glucose: step 2/4. Functionally, catalyzes the reversible isomerization of glucose-6-phosphate to fructose-6-phosphate. This Mesorhizobium japonicum (strain LMG 29417 / CECT 9101 / MAFF 303099) (Mesorhizobium loti (strain MAFF 303099)) protein is Glucose-6-phosphate isomerase.